We begin with the raw amino-acid sequence, 245 residues long: Purine nucleoside phosphorylase (245 aa).

His8 lines the a purine D-ribonucleoside pocket. Phosphate contacts are provided by residues 24-28 (GDPGR), Arg46, and 89-92 (RAGS). 184–185 (ME) is an a purine D-ribonucleoside binding site. The active-site Proton donor is Asp207.

It belongs to the PNP/MTAP phosphorylase family. As to quaternary structure, homohexamer; trimer of homodimers.

The catalysed reaction is inosine + phosphate = alpha-D-ribose 1-phosphate + hypoxanthine. It carries out the reaction guanosine + phosphate = alpha-D-ribose 1-phosphate + guanine. It catalyses the reaction 2'-deoxyguanosine + phosphate = 2-deoxy-alpha-D-ribose 1-phosphate + guanine. The enzyme catalyses 2'-deoxyinosine + phosphate = 2-deoxy-alpha-D-ribose 1-phosphate + hypoxanthine. It functions in the pathway purine metabolism; purine nucleoside salvage. Functionally, as part of the purine salvage pathway, catalyzes the phosphorolytic breakdown of the N-glycosidic bond in the beta-(deoxy)ribonucleoside molecules, with the formation of the corresponding free purine bases and pentose-1-phosphate. Preferentially acts on inosine and guanosine, and to a lesser extent on 2'-deoxyinosine and 2'-deoxyguanosine. The sequence is that of Purine nucleoside phosphorylase from Plasmodium vivax (strain Salvador I).